Here is a 427-residue protein sequence, read N- to C-terminus: ETS domain-containing protein Elk-1 (427 aa).

Residues 5 to 86 (VTLWQFLLQL…SGQKFVYKFV (82 aa)) constitute a DNA-binding region (ETS). Disordered regions lie at residues 116–146 (ATVHSGPGDNATGKPGTPKGAGMTGQGGLAR), 166–202 (LQPQPPLHPRPASVLPNTTPAGVPAPPSGSRSTSPNP), and 226–252 (PNQKSEELSLNPGFGRPQPPEVKVEGP). Residues Lys-229, Lys-248, and Lys-253 each participate in a glycyl lysine isopeptide (Lys-Gly) (interchain with G-Cter in SUMO) cross-link. A compositionally biased stretch (polar residues) spans 300–310 (STSTTEITQPQ). Residues 300 to 350 (STSTTEITQPQKGRKPRDLELPLSPSLLGGQGPERTPGSGTSSGLQAQGPA) are disordered. Ser-323 bears the Phosphoserine; by MAPK1 mark. 4 positions are modified to phosphothreonine; by MAPK1: Thr-335, Thr-352, Thr-362, and Thr-367. The segment at 348–398 (GPALTPSLLPTHTLTPVLLTPSSLPPSIHFWSTLSPIAPRSPAKLSFQFPS) is sufficient for interaction with MAD2L2. The O-linked (GlcNAc) threonine glycan is linked to Thr-380. Phosphoserine; by MAPK1 and MAPK8 is present on Ser-382. Phosphoserine; by MAPK1 is present on Ser-388. Thr-416 is subject to Phosphothreonine; by MAPK1. Ser-421 bears the Phosphoserine; by MAPK1 mark.

This sequence belongs to the ETS family. As to quaternary structure, interacts in its sumoylated form with PIAS2/PIASX which enhances its transcriptional activator activity. Interacts with MAD2L2; the interaction is direct and promotes phosphorylation by the kinases MAPK8 and/or MAPK9. Interacts with POU1F1. In terms of processing, sumoylation represses transcriptional activator activity as it results in recruitment of HDAC2 to target gene promoters which leads to decreased histone acetylation and reduced transactivator activity. It also regulates nuclear retention. On mitogenic stimulation, phosphorylated on C-terminal serine and threonine residues by MAPK1. Ser-382 and Ser-388 are the preferred sites for MAPK1. In vitro, phosphorylation by MAPK1 potentiates ternary complex formation with the serum responses factors, SRE and SRF. Also phosphorylated on Ser-382 by MAPK8 and/or MAKP9. Phosphorylation leads to loss of sumoylation and restores transcriptional activator activity. Phosphorylated and activated by CAMK4, MAPK11, MAPK12 and MAPK14. Upon bFGF stimulus, phosphorylated by PAK1. Phosphorylated by PRP4K at Thr-416; phosphorylation activation ELK1 transcriptional activity.

The protein resides in the nucleus. Its function is as follows. Transcription factor that binds to purine-rich DNA sequences. Forms a ternary complex with SRF and the ETS and SRF motifs of the serum response element (SRE) on the promoter region of immediate early genes such as FOS and IER2. Induces target gene transcription upon JNK and MAPK-signaling pathways stimulation. In Rattus norvegicus (Rat), this protein is ETS domain-containing protein Elk-1.